A 100-amino-acid polypeptide reads, in one-letter code: MAERSDPLTRGLVALIRGYQVAISPLLPPACRYYPTCSQYTLEAVRRYGAIRGSWLGIRRLCRCHPWHPGGYDPVPDLPGSAPEENGRPSPDGQHSGSGG.

Residues 73–100 (DPVPDLPGSAPEENGRPSPDGQHSGSGG) are disordered.

Belongs to the UPF0161 family.

It localises to the cell inner membrane. Its function is as follows. Could be involved in insertion of integral membrane proteins into the membrane. The chain is Putative membrane protein insertion efficiency factor from Synechococcus sp. (strain JA-3-3Ab) (Cyanobacteria bacterium Yellowstone A-Prime).